The chain runs to 128 residues: Sulfurtransferase TusD (128 aa).

Cys78 acts as the Cysteine persulfide intermediate in catalysis.

The protein belongs to the DsrE/TusD family. Heterohexamer, formed by a dimer of trimers. The hexameric TusBCD complex contains 2 copies each of TusB, TusC and TusD. The TusBCD complex interacts with TusE.

It localises to the cytoplasm. In terms of biological role, part of a sulfur-relay system required for 2-thiolation of 5-methylaminomethyl-2-thiouridine (mnm(5)s(2)U) at tRNA wobble positions. Accepts sulfur from TusA and transfers it in turn to TusE. In Escherichia coli (strain 55989 / EAEC), this protein is Sulfurtransferase TusD.